The primary structure comprises 426 residues: Enolase (426 aa).

Q163 contributes to the (2R)-2-phosphoglycerate binding site. The active-site Proton donor is the E205. Mg(2+)-binding residues include D242, E285, and D312. Residues K337, R366, S367, and K388 each contribute to the (2R)-2-phosphoglycerate site. Residue K337 is the Proton acceptor of the active site.

The protein belongs to the enolase family. Mg(2+) is required as a cofactor.

It localises to the cytoplasm. Its subcellular location is the secreted. The protein localises to the cell surface. The catalysed reaction is (2R)-2-phosphoglycerate = phosphoenolpyruvate + H2O. The protein operates within carbohydrate degradation; glycolysis; pyruvate from D-glyceraldehyde 3-phosphate: step 4/5. In terms of biological role, catalyzes the reversible conversion of 2-phosphoglycerate (2-PG) into phosphoenolpyruvate (PEP). It is essential for the degradation of carbohydrates via glycolysis. The sequence is that of Enolase from Gluconacetobacter diazotrophicus (strain ATCC 49037 / DSM 5601 / CCUG 37298 / CIP 103539 / LMG 7603 / PAl5).